The primary structure comprises 341 residues: UDP-glucose 4-epimerase (341 aa).

Belongs to the polysaccharide synthase family.

The catalysed reaction is UDP-alpha-D-glucose = UDP-alpha-D-galactose. Its function is as follows. Epimerizes UDP-galactose to UDP-glucose. The protein is UDP-glucose 4-epimerase (capD) of Rickettsia conorii (strain ATCC VR-613 / Malish 7).